The primary structure comprises 293 residues: Protease HtpX (293 aa).

2 helical membrane passes run 2–22 (FRIL…SVTL) and 38–58 (LTSL…ISLF). A Zn(2+)-binding site is contributed by His145. Residue Glu146 is part of the active site. Position 149 (His149) interacts with Zn(2+). Transmembrane regions (helical) follow at residues 156–176 (VTLA…ARII) and 193–213 (IGFF…ASII). Glu222 lines the Zn(2+) pocket.

Belongs to the peptidase M48B family. The cofactor is Zn(2+).

The protein resides in the cell inner membrane. The polypeptide is Protease HtpX (Hahella chejuensis (strain KCTC 2396)).